The primary structure comprises 163 residues: MPAPILPLIEAAAQWPARGALIGLDLGTKTIGVAVSDPDRRLATGVETIIHTAFKANAARLLLLAGQRNAVGFVLGLPINMDGSEGPRAQSTRAFARNFARLTDLPIGLWDERLSTSAVERELIANDVSRAKRAKVIDEHAAIFILQGALDRLTVLNAAPRTD.

This sequence belongs to the YqgF nuclease family.

It localises to the cytoplasm. Its function is as follows. Could be a nuclease involved in processing of the 5'-end of pre-16S rRNA. In Rhodopseudomonas palustris (strain BisB18), this protein is Putative pre-16S rRNA nuclease.